The primary structure comprises 269 residues: Pertussis toxin subunit 1 homolog (269 aa).

Residues 1 to 34 (MRCTRAIRQTARTGWLTWLAILAVTAPVTSPAWA) form the signal peptide.

The protein belongs to the bacterial exotoxin subunit A family.

This chain is Pertussis toxin subunit 1 homolog (ptxA), found in Bordetella bronchiseptica (strain ATCC BAA-588 / NCTC 13252 / RB50) (Alcaligenes bronchisepticus).